The sequence spans 160 residues: Transcription antitermination protein NusB (160 aa).

Belongs to the NusB family.

Functionally, involved in transcription antitermination. Required for transcription of ribosomal RNA (rRNA) genes. Binds specifically to the boxA antiterminator sequence of the ribosomal RNA (rrn) operons. This Sinorhizobium fredii (strain NBRC 101917 / NGR234) protein is Transcription antitermination protein NusB.